A 256-amino-acid chain; its full sequence is Trans-aconitate 2-methyltransferase (256 aa).

The protein belongs to the methyltransferase superfamily. Tam family.

It localises to the cytoplasm. It carries out the reaction trans-aconitate + S-adenosyl-L-methionine = (E)-3-(methoxycarbonyl)pent-2-enedioate + S-adenosyl-L-homocysteine. In terms of biological role, catalyzes the S-adenosylmethionine monomethyl esterification of trans-aconitate. This is Trans-aconitate 2-methyltransferase from Rhizobium etli (strain ATCC 51251 / DSM 11541 / JCM 21823 / NBRC 15573 / CFN 42).